A 65-amino-acid polypeptide reads, in one-letter code: Small ribosomal subunit protein bS21A (65 aa).

The protein belongs to the bacterial ribosomal protein bS21 family.

The protein is Small ribosomal subunit protein bS21A of Francisella tularensis subsp. tularensis (strain FSC 198).